A 109-amino-acid polypeptide reads, in one-letter code: FAD assembly factor SdhE (109 aa).

Positions Met1 to Asp22 are disordered. A compositionally biased stretch (low complexity) spans Ala7–Ser17.

Belongs to the SdhE FAD assembly factor family.

It is found in the cytoplasm. Functionally, an FAD assembly protein, which accelerates covalent attachment of the cofactor into other proteins. Plays an essential role in the assembly of succinate dehydrogenase (SDH, respiratory complex II), an enzyme complex that is a component of both the tricarboxylic acid cycle and the electron transport chain, and which couples the oxidation of succinate to fumarate with the reduction of ubiquinone (coenzyme Q) to ubiquinol. Required for flavinylation of SdhA, when the SDH operon and this gene are overexpressed in G.oxydans. Flavinylation of SdhA is detected only in the presence of sdhE. In Acetobacter pasteurianus (strain NBRC 105184 / IFO 3283-01), this protein is FAD assembly factor SdhE.